Consider the following 799-residue polypeptide: Mitochondrial intermediate peptidase (799 aa).

A Zn(2+)-binding site is contributed by H562. E563 is an active-site residue. Positions 566 and 569 each coordinate Zn(2+).

It belongs to the peptidase M3 family. The cofactor is Zn(2+).

It localises to the mitochondrion matrix. It catalyses the reaction Release of an N-terminal octapeptide as second stage of processing of some proteins imported into the mitochondrion.. Functionally, cleaves proteins, imported into the mitochondrion, to their mature size. While most mitochondrial precursor proteins are processed to the mature form in one step by mitochondrial processing peptidase (MPP), the sequential cleavage by MIP of an octapeptide after initial processing by MPP is a required step for a subgroup of nuclear-encoded precursor proteins destined for the matrix or the inner membrane. This is Mitochondrial intermediate peptidase (oct1) from Aspergillus niger (strain ATCC MYA-4892 / CBS 513.88 / FGSC A1513).